A 345-amino-acid chain; its full sequence is Transcription factor 19 (345 aa).

An FHA domain is found at 31-88; that stretch reads YRLGHRADLCDVALRPQQEPGLISGIHAELHAEPRGDDWRVSLEDHSSQGTLVNNVRL. At S78 the chain carries Phosphoserine. 2 disordered regions span residues 147–167 and 190–227; these read AGFR…STLS and LTFS…RKSV. A PHD-type zinc finger spans residues 293–342; that stretch reads AAPCCCLPQEETVAWVQCDGCDVWFHVACVGCSIQAAREADFRCPGCRAG. 8 residues coordinate Zn(2+): C296, C298, C310, C313, H318, C321, C336, and C339.

It is found in the nucleus. Functionally, potential transcription factor that may play a role in the regulation of genes involved in cell cycle G1/S transition. May bind to regulatory elements of genes, including the promoter of the transcription factor FOXO1. This is Transcription factor 19 (TCF19) from Pan troglodytes (Chimpanzee).